Consider the following 414-residue polypeptide: Enolase (414 aa).

A (2R)-2-phosphoglycerate-binding site is contributed by Q162. Residue E204 is the Proton donor of the active site. 3 residues coordinate Mg(2+): D239, E280, and D307. (2R)-2-phosphoglycerate contacts are provided by K332, R361, S362, and K383. K332 acts as the Proton acceptor in catalysis.

It belongs to the enolase family. Mg(2+) serves as cofactor.

Its subcellular location is the cytoplasm. The protein resides in the secreted. It is found in the cell surface. It catalyses the reaction (2R)-2-phosphoglycerate = phosphoenolpyruvate + H2O. It participates in carbohydrate degradation; glycolysis; pyruvate from D-glyceraldehyde 3-phosphate: step 4/5. Functionally, catalyzes the reversible conversion of 2-phosphoglycerate (2-PG) into phosphoenolpyruvate (PEP). It is essential for the degradation of carbohydrates via glycolysis. The sequence is that of Enolase from Campylobacter lari (strain RM2100 / D67 / ATCC BAA-1060).